Reading from the N-terminus, the 187-residue chain is GTP cyclohydrolase 1 (187 aa).

Zn(2+) is bound by residues C76, H79, and C148.

This sequence belongs to the GTP cyclohydrolase I family. As to quaternary structure, toroid-shaped homodecamer, composed of two pentamers of five dimers.

It carries out the reaction GTP + H2O = 7,8-dihydroneopterin 3'-triphosphate + formate + H(+). It functions in the pathway cofactor biosynthesis; 7,8-dihydroneopterin triphosphate biosynthesis; 7,8-dihydroneopterin triphosphate from GTP: step 1/1. This is GTP cyclohydrolase 1 from Streptococcus agalactiae serotype V (strain ATCC BAA-611 / 2603 V/R).